The sequence spans 230 residues: Protein tumorous testis (230 aa).

The 92-residue stretch at 37 to 128 folds into the RRM domain; that stretch reads GELFLSCIPR…RELVLKNVES (92 aa).

Part of a complex composed of at least tut, bam and bgcn; complex formation does not require RNA. Interacts with bam (via N-terminus); the interaction is direct. Interacts with bgcn; the interaction is indirect and is mediated by bam. As part of the bam-bgcn-tut complex associates with twin; may recruit the CCR4-NOT1 deadenylation complex to mRNA 3'UTRs to mediate post-transcriptional regulation of expression.

It localises to the cytoplasm. RNA binding protein that forms a complex with bam and bgcn, involved in 3'UTR-dependent regulation of a subset of mRNAs. Preferentially binds a long isoform of mei-P26 transcripts. Involved in 3'UTR-dependent post-transcriptional repression of several 3'-RNA processing factors. Involved in promoting germline stem cell lineage differentiation and mitosis-to-meiosis transition. Required for proper transit amplification of spermatogonia. The sequence is that of Protein tumorous testis from Drosophila melanogaster (Fruit fly).